Reading from the N-terminus, the 305-residue chain is Glutaminase (305 aa).

7 residues coordinate substrate: serine 63, asparagine 113, glutamate 158, asparagine 165, tyrosine 189, tyrosine 241, and valine 259.

Belongs to the glutaminase family. In terms of assembly, homotetramer.

The catalysed reaction is L-glutamine + H2O = L-glutamate + NH4(+). This chain is Glutaminase, found in Aliarcobacter butzleri (strain RM4018) (Arcobacter butzleri).